A 459-amino-acid polypeptide reads, in one-letter code: Hypotaurine/taurine--pyruvate aminotransferase (459 aa).

Lysine 287 carries the post-translational modification N6-(pyridoxal phosphate)lysine.

Belongs to the class-III pyridoxal-phosphate-dependent aminotransferase family. Pyridoxal 5'-phosphate is required as a cofactor.

It catalyses the reaction hypotaurine + pyruvate = 2-sulfinoacetaldehyde + L-alanine. The enzyme catalyses taurine + pyruvate = sulfoacetaldehyde + L-alanine. The protein operates within organosulfur degradation. In terms of biological role, converts hypotaurine to alanine and sulfinoacetaldehyde, which desulfinates spontaneously to acetaldehyde and sulfite. Can also catalyze the degradation of taurine into alanine and sulfoacetaldehyde, which is stable. Has 2-fold higher aminotransferase activity with hypotaurine as the substrate. The sequence is that of Hypotaurine/taurine--pyruvate aminotransferase from Paracoccus denitrificans (strain Pd 1222).